Here is a 310-residue protein sequence, read N- to C-terminus: p-hydroxybenzoic acid efflux pump subunit AaeA (310 aa).

A helical membrane pass occupies residues 12-32 (AITVVLVILAFIAIFNAWVYY).

It belongs to the membrane fusion protein (MFP) (TC 8.A.1) family.

The protein localises to the cell inner membrane. Forms an efflux pump with AaeB. This Escherichia coli O8 (strain IAI1) protein is p-hydroxybenzoic acid efflux pump subunit AaeA.